The sequence spans 1209 residues: Nitric oxide synthase (1209 aa).

Ser103 contacts (6R)-L-erythro-5,6,7,8-tetrahydrobiopterin. Residue Cys181 participates in heme b binding. Gln244, Trp353, Tyr354, Glu358, and Asn363 together coordinate L-arginine. (6R)-L-erythro-5,6,7,8-tetrahydrobiopterin contacts are provided by Trp444 and Phe457. Tyr472 is a heme b binding site. Positions 491–511 are calmodulin-binding; sequence VHRKFHFKQIARAVKFTSKLF. The 203-residue stretch at 521-723 folds into the Flavodoxin-like domain; the sequence is ATILYATETG…QFRAWSSKIF (203 aa). 527-531 contacts FMN; that stretch reads TETGK. The tract at residues 603–622 is disordered; that stretch reads RGDGTSDLGSGTFKTPTPKS. An FMN-binding site is contributed by 669 to 700; that stretch reads VFGLGSSAYPKFCHFGKTVDKILGDLGGERIL. The region spanning 776-1021 is the FAD-binding FR-type domain; it reads KQLITCKVKE…IRRAPSFHMP (246 aa). Residues 811-822 and 954-964 contribute to the FAD site; these read YDPGDHVGVLAC and LQPRFYSISSS. NADP(+) is bound by residues 1028-1147 and 1128-1143; these read LILV…QQKL and NGHF…AEEV.

It belongs to the NOS family. The cofactor is heme b. FAD serves as cofactor. It depends on FMN as a cofactor. As to expression, constitutively expressed at a low level in the larval fat body, hemocyte, Malpighian tubule, midgut, silk gland and adult antenna.

It catalyses the reaction 2 L-arginine + 3 NADPH + 4 O2 + H(+) = 2 L-citrulline + 2 nitric oxide + 3 NADP(+) + 4 H2O. Its activity is regulated as follows. Expression is dependent on and stimulated by NADPH, calcium, BH4 and calmodulin. The activity is not dependent on FAD and is not stimulated by its presence. Its function is as follows. Produces nitric oxide (NO) which is a messenger molecule with diverse functions throughout the body. Involved in the induction of immune gene expression. This Bombyx mori (Silk moth) protein is Nitric oxide synthase.